The following is an 821-amino-acid chain: Calpain-3 (821 aa).

The segment at 1-37 is disordered; that stretch reads MPTVISPTVAPRTGAEPRSPGPVPHPAQGKTTEAGGG. One can recognise a Calpain catalytic domain in the interval 74–417; the sequence is LYLDPEFPPD…FTKLEICNLT (344 aa). Active-site residues include C129, H334, and N358. Residues 418 to 586 form a domain III region; that stretch reads ADALESDKLQ…KRNLSEEAEN (169 aa). The linker stretch occupies residues 587–649; that stretch reads TISVDRPVKK…RPGHTDQESE (63 aa). Positions 603–651 are disordered; sequence IFVSDRANSNKELGVDQEAEEGKDKTGPDKQGESPQPRPGHTDQESEEQ. The segment covering 622-634 has biased composition (basic and acidic residues); that stretch reads EEGKDKTGPDKQG. EF-hand domains follow at residues 649–683, 692–725, 722–757, and 787–821; these read EEQQ…VVNK, FTLE…KKIK, KKIK…AGFH, and VRLE…TMYA. Residues 650-820 are domain IV; it reads EQQQFRNIFR…VLEWLQLTMY (171 aa). Residues A662, D665, E667, E672, D705, D707, S709, R711, E716, D735, D737, S739, T741, E746, D800, D802, D804, and I806 each contribute to the Ca(2+) site.

Belongs to the peptidase C2 family. In terms of assembly, homodimer; via EF-hand domain 4. Interacts with TTN/titin. Interacts with CMYA5; this interaction, which results in CMYA5 proteolysis, may protect CAPN3 from autolysis. Interacts with SIMC1. Interacts with UTP25; the interaction is required for CAPN3 translocation to the nucleolus. In terms of tissue distribution, skeletal muscle.

The protein resides in the cytoplasm. The protein localises to the nucleus. It is found in the nucleolus. It carries out the reaction Broad endopeptidase activity.. Activated by micromolar concentrations of calcium and inhibited by calpastatin. Functionally, calcium-regulated non-lysosomal thiol-protease. Proteolytically cleaves CTBP1 at 'His-399'. Mediates, with UTP25, the proteasome-independent degradation of p53/TP53. This is Calpain-3 (Capn3) from Rattus norvegicus (Rat).